Here is a 535-residue protein sequence, read N- to C-terminus: Putative transcription activator BRLF1 homolog (535 aa).

The tract at residues lysine 384–phenylalanine 426 is disordered. Basic residues predominate over residues arginine 404–proline 419.

This sequence belongs to the herpesviridae TAF50 family.

Transcription activation. Regulates the delayed-early 110 kDa promoter. This chain is Putative transcription activator BRLF1 homolog (50), found in Saimiriine herpesvirus 2 (strain 11) (SaHV-2).